A 191-amino-acid chain; its full sequence is Prostaglandin-H2 D-isomerase (191 aa).

An N-terminal signal peptide occupies residues 1–24; sequence MAALHTLWMGLVLLGVLGVLQTRA. Residue glutamine 25 is modified to Pyrrolidone carboxylic acid. A glycan (N-linked (GlcNAc...) asparagine) is linked at asparagine 51. Cysteine 65 serves as the catalytic Nucleophile. The N-linked (GlcNAc...) asparagine glycan is linked to asparagine 78. Cysteine 89 and cysteine 186 are joined by a disulfide.

This sequence belongs to the calycin superfamily. Lipocalin family. As to quaternary structure, monomer. In terms of processing, N- and O-glycosylated. Both N-glycosylation recognition sites are almost quantitatively occupied by N-glycans of the biantennary complex type, with a considerable proportion of structures bearing a bisecting GlcNAc. N-glycan at Asn-78: dHex1Hex5HexNAc4. Agalacto structure as well as sialylated and nonsialylated oligosaccharides bearing alpha2-3- and/or alpha2-6-linked NeuNAc are present.

The protein localises to the rough endoplasmic reticulum. It localises to the nucleus membrane. The protein resides in the golgi apparatus. It is found in the cytoplasm. Its subcellular location is the perinuclear region. The protein localises to the secreted. It carries out the reaction prostaglandin H2 = prostaglandin D2. In terms of biological role, catalyzes the conversion of PGH2 to PGD2, a prostaglandin involved in smooth muscle contraction/relaxation and a potent inhibitor of platelet aggregation. Involved in a variety of CNS functions, such as sedation, NREM sleep and PGE2-induced allodynia, and may have an anti-apoptotic role in oligodendrocytes. Binds small non-substrate lipophilic molecules, including biliverdin, bilirubin, retinal, retinoic acid and thyroid hormone, and may act as a scavenger for harmful hydrophobic molecules and as a secretory retinoid and thyroid hormone transporter. Possibly involved in development and maintenance of the blood-brain, blood-retina, blood-aqueous humor and blood-testis barrier. It is likely to play important roles in both maturation and maintenance of the central nervous system and male reproductive system. Involved in PLA2G3-dependent maturation of mast cells. PLA2G3 is secreted by immature mast cells and acts on nearby fibroblasts upstream to PTDGS to synthesize PGD2, which in turn promotes mast cell maturation and degranulation via PTGDR. The polypeptide is Prostaglandin-H2 D-isomerase (PTGDS) (Felis catus (Cat)).